Consider the following 224-residue polypeptide: Ribonuclease T (224 aa).

An Exonuclease domain is found at 32–206 (VVVDVETGGF…YDTEKTAELF (175 aa)). Mg(2+) contacts are provided by Asp35, Glu37, His193, and Asp198. Residue His193 is the Proton donor/acceptor of the active site.

It belongs to the RNase T family. As to quaternary structure, homodimer. Mg(2+) is required as a cofactor.

Trims short 3' overhangs of a variety of RNA species, leaving a one or two nucleotide 3' overhang. Responsible for the end-turnover of tRNA: specifically removes the terminal AMP residue from uncharged tRNA (tRNA-C-C-A). Also appears to be involved in tRNA biosynthesis. The sequence is that of Ribonuclease T from Pseudomonas fluorescens (strain Pf0-1).